A 212-amino-acid chain; its full sequence is Amelotin (212 aa).

The first 16 residues, 1–16, serve as a signal peptide directing secretion; that stretch reads MKTVVLLLCLLGSAQS. Disordered regions lie at residues 23 to 42 and 141 to 212; these read PALGAPATKPTPGQVTPLTQ and PSGQ…NRTK. Composition is skewed to polar residues over residues 33–42 and 165–178; these read TPGQVTPLTQ and PANQATTPGHTTPA.

Belongs to the amelotin family. In terms of processing, O-glycosylated. Phosphorylated by FAM20C in vitro. In terms of tissue distribution, highest expression in the mandible. Found in the basal lamina of maturation stage ameloblasts of incisors and unerupted molars. Also found in the internal basal lamina of junctional epithelium in molars.

The protein resides in the secreted. Functionally, is a promoter of calcium phosphate mineralization, playing a critical role in the formation of the compact, mineralized, aprismatic enamel surface layer during the maturation stage of amelogenesis. In Rattus norvegicus (Rat), this protein is Amelotin.